Reading from the N-terminus, the 542-residue chain is Probable myosin-binding protein 6 (542 aa).

A signal peptide spans 1 to 21 (MYIQLLCFFLFLFLLLQATMS). The chain crosses the membrane as a helical span at residues 39 to 59 (FLIYTVLEWSLIVFLFIDGVI). The interval 219-239 (SFLAPAPSPRVSHNKLSENES) is disordered. The GTD-binding domain occupies 300 to 398 (SILNQLKKEV…ELEAEFEVYR (99 aa)). Residues 419–480 (GNASAYDDCQ…DEEKGSESKE (62 aa)) are disordered. Over residues 437-456 (AVSSSNQQENGENIDQNGQS) the composition is skewed to polar residues. A compositionally biased stretch (basic and acidic residues) spans 471-480 (DEEKGSESKE).

The protein resides in the membrane. Probable membrane-anchored myosin receptors. This chain is Probable myosin-binding protein 6, found in Arabidopsis thaliana (Mouse-ear cress).